The primary structure comprises 361 residues: MLCIGIETSCDETGLALVRDGRLVHAVMSSQADIHALFGGVVPEIASREHYRLIGPLYDLLLREAGVGPTELDAVAVARGPGLLGSLLVGMAFAKGLALGFDIPLVGVNHLHAHLLAAGLERELVFPALGLLVSGGHTHIYRIESPVSFRLLGRTLDDAAGEAYDKVAKMLRLPYPGGRILDQQGRRGIADPRLFPRPYTDNDNLDFSFSGLKTAVQTHLSRHPELVPSPDAAQAVAGGHDAPEGLRNMCASFNEAVAETLCIKLGRALDGDDGVGVRALIVAGGVAANSYVREHTARLAVSRGLELIVPSPPLCTDNGSMIAYAGWLLRQGGLSHSLDLEAVPRGRAIPDDYRQGPAGCS.

Residues H110 and H114 each contribute to the Fe cation site. Residues 132–136, D165, G178, D182, and N289 contribute to the substrate site; that span reads LVSGG. Fe cation is bound at residue D317.

This sequence belongs to the KAE1 / TsaD family. The cofactor is Fe(2+).

Its subcellular location is the cytoplasm. It carries out the reaction L-threonylcarbamoyladenylate + adenosine(37) in tRNA = N(6)-L-threonylcarbamoyladenosine(37) in tRNA + AMP + H(+). Its function is as follows. Required for the formation of a threonylcarbamoyl group on adenosine at position 37 (t(6)A37) in tRNAs that read codons beginning with adenine. Is involved in the transfer of the threonylcarbamoyl moiety of threonylcarbamoyl-AMP (TC-AMP) to the N6 group of A37, together with TsaE and TsaB. TsaD likely plays a direct catalytic role in this reaction. This Nitratidesulfovibrio vulgaris (strain ATCC 29579 / DSM 644 / CCUG 34227 / NCIMB 8303 / VKM B-1760 / Hildenborough) (Desulfovibrio vulgaris) protein is tRNA N6-adenosine threonylcarbamoyltransferase.